The following is a 341-amino-acid chain: Thymidine kinase (341 aa).

Position 19–26 (19–26) interacts with ATP; sequence GAYGIGKT. Glutamate 48 functions as the Proton acceptor in the catalytic mechanism. Substrate is bound by residues tyrosine 66 and glutamine 90. Arginine 183 provides a ligand contact to ATP. Residue arginine 189 participates in substrate binding.

It belongs to the herpesviridae thymidine kinase family. In terms of assembly, homodimer.

The enzyme catalyses thymidine + ATP = dTMP + ADP + H(+). Functionally, catalyzes the transfer of the gamma-phospho group of ATP to thymidine to generate dTMP in the salvage pathway of pyrimidine synthesis. The dTMP serves as a substrate for DNA polymerase during viral DNA replication. Allows the virus to be reactivated and to grow in non-proliferative cells lacking a high concentration of phosphorylated nucleic acid precursors. This is Thymidine kinase from Varicella-zoster virus (strain Oka vaccine) (HHV-3).